Reading from the N-terminus, the 1175-residue chain is uncharacterized protein (1175 aa).

586–593 is an ATP binding site; that stretch reads GPAGTGKT.

This is an uncharacterized protein from Methanocaldococcus jannaschii (strain ATCC 43067 / DSM 2661 / JAL-1 / JCM 10045 / NBRC 100440) (Methanococcus jannaschii).